A 585-amino-acid polypeptide reads, in one-letter code: Putative indole-3-acetic acid-amido synthetase GH3.9 (585 aa).

It belongs to the IAA-amido conjugating enzyme family.

Functionally, catalyzes the synthesis of indole-3-acetic acid (IAA)-amino acid conjugates, providing a mechanism for the plant to cope with the presence of excess auxin. The chain is Putative indole-3-acetic acid-amido synthetase GH3.9 (GH3.9) from Arabidopsis thaliana (Mouse-ear cress).